A 1338-amino-acid polypeptide reads, in one-letter code: Vascular endothelial growth factor receptor 1 (1338 aa).

A signal peptide spans 1–26 (MVSYWDTGVLLCALLSCLLLTGSSSG). The Extracellular portion of the chain corresponds to 27–758 (SKLKDPELSL…QGTSDKSNLE (732 aa)). 7 Ig-like C2-type domains span residues 32–123 (PELS…TESA), 151–214 (GREL…VNGH), 230–327 (IDVQ…TSVH), 335–421 (TVKH…LTAT), 428–553 (PQIY…FYIT), 556–654 (PNGF…KEIT), and 661–747 (PYLL…AYLT). 2 disulfide bridges follow: cysteine 53–cysteine 107 and cysteine 158–cysteine 207. N-linked (GlcNAc...) asparagine glycosylation is found at asparagine 100, asparagine 164, asparagine 196, and asparagine 251. A disulfide bridge links cysteine 252 with cysteine 311. Residues asparagine 323, asparagine 402, asparagine 417, asparagine 474, asparagine 547, asparagine 597, asparagine 620, asparagine 625, and asparagine 666 are each glycosylated (N-linked (GlcNAc...) asparagine). Cysteine 454 and cysteine 535 form a disulfide bridge. Cysteine 577 and cysteine 636 are disulfide-bonded. An intrachain disulfide couples cysteine 682 to cysteine 731. Residues 759 to 780 (LITLTCTCVAATLFWLLLTLFI) traverse the membrane as a helical segment. Residues 781 to 1338 (RKMKRSSSEI…SVVLYSTPPI (558 aa)) lie on the Cytoplasmic side of the membrane. Residues 827–1158 (LKLGKSLGRG…ELVEKLGDLL (332 aa)) enclose the Protein kinase domain. Residues 833–841 (LGRGAFGKV) and lysine 861 each bind ATP. Residue tyrosine 914 is modified to Phosphotyrosine; by autocatalysis. A compositionally biased stretch (basic and acidic residues) spans 940–957 (PKKEKMEPGLEQGKKPRL). The tract at residues 940–982 (PKKEKMEPGLEQGKKPRLDSVTSSESFASSGFQEDKSLSDVEE) is disordered. Residues 959–971 (SVTSSESFASSGF) are compositionally biased toward polar residues. The active-site Proton acceptor is aspartate 1022. Phosphotyrosine; by autocatalysis is present on residues tyrosine 1053, tyrosine 1169, tyrosine 1213, tyrosine 1242, tyrosine 1309, tyrosine 1327, and tyrosine 1333.

Belongs to the protein kinase superfamily. Tyr protein kinase family. CSF-1/PDGF receptor subfamily. As to quaternary structure, interacts with VEGFA, VEGFB and PGF. Monomer in the absence of bound VEGFA, VEGFB or PGF. Homodimer in the presence of bound VEGFA, VEGFB and PGF. Can also form a heterodimer with KDR. Interacts (when tyrosine phosphorylated) with CBL, CRK, GRB2, NCK1, PIK3R1, PLCG, PSEN1 and PTPN11. Probably also interacts with PTPRB. Interacts with RACK1. Identified in a complex with CBL and CD2AP. N-glycosylated. In terms of processing, ubiquitinated after VEGFA-mediated autophosphorylation, leading to proteolytic degradation. Post-translationally, autophosphorylated on tyrosine residues upon ligand binding. Autophosphorylation occurs in trans, i.e. one subunit of the dimeric receptor phosphorylates tyrosine residues on the other subunit. Phosphorylation at Tyr-1169 is important for interaction with PLCG. Phosphorylation at Tyr-1213 is important for interaction with PIK3R1, PTPN11, GRB2, and PLCG. Phosphorylation at Tyr-1333 is important for endocytosis and for interaction with CBL, NCK1 and CRK. Is probably dephosphorylated by PTPRB. As to expression, detected in normal lung, but also in placenta, liver, kidney, heart and brain tissues. Specifically expressed in most of the vascular endothelial cells, and also expressed in peripheral blood monocytes. Isoform 2 is strongly expressed in placenta. Isoform 3 is expressed in corneal epithelial cells (at protein level). Isoform 3 is expressed in vascular smooth muscle cells (VSMC).

Its subcellular location is the cell membrane. The protein localises to the endosome. It localises to the secreted. It is found in the cytoplasm. The enzyme catalyses L-tyrosyl-[protein] + ATP = O-phospho-L-tyrosyl-[protein] + ADP + H(+). With respect to regulation, present in an inactive conformation in the absence of bound ligand. Binding of VEGFA, VEGFB or PGF leads to dimerization and activation by autophosphorylation on tyrosine residues. In terms of biological role, tyrosine-protein kinase that acts as a cell-surface receptor for VEGFA, VEGFB and PGF, and plays an essential role in the development of embryonic vasculature, the regulation of angiogenesis, cell survival, cell migration, macrophage function, chemotaxis, and cancer cell invasion. Acts as a positive regulator of postnatal retinal hyaloid vessel regression. May play an essential role as a negative regulator of embryonic angiogenesis by inhibiting excessive proliferation of endothelial cells. Can promote endothelial cell proliferation, survival and angiogenesis in adulthood. Its function in promoting cell proliferation seems to be cell-type specific. Promotes PGF-mediated proliferation of endothelial cells, proliferation of some types of cancer cells, but does not promote proliferation of normal fibroblasts (in vitro). Has very high affinity for VEGFA and relatively low protein kinase activity; may function as a negative regulator of VEGFA signaling by limiting the amount of free VEGFA and preventing its binding to KDR. Modulates KDR signaling by forming heterodimers with KDR. Ligand binding leads to the activation of several signaling cascades. Activation of PLCG leads to the production of the cellular signaling molecules diacylglycerol and inositol 1,4,5-trisphosphate and the activation of protein kinase C. Mediates phosphorylation of PIK3R1, the regulatory subunit of phosphatidylinositol 3-kinase, leading to activation of phosphatidylinositol kinase and the downstream signaling pathway. Mediates activation of MAPK1/ERK2, MAPK3/ERK1 and the MAP kinase signaling pathway, as well as of the AKT1 signaling pathway. Phosphorylates SRC and YES1, and may also phosphorylate CBL. Promotes phosphorylation of AKT1 at 'Ser-473'. Promotes phosphorylation of PTK2/FAK1. Phosphorylates PLCG. Functionally, may function as decoy receptor for VEGFA. Its function is as follows. Has a truncated kinase domain; it increases phosphorylation of SRC at 'Tyr-418' by unknown means and promotes tumor cell invasion. The chain is Vascular endothelial growth factor receptor 1 (FLT1) from Homo sapiens (Human).